The following is a 387-amino-acid chain: Putative transmembrane protein At3g54730 (387 aa).

The segment covering Pro-10 to Ala-25 has biased composition (pro residues). The segment at Pro-10–Pro-45 is disordered. Helical transmembrane passes span Val-97–Val-117, Gly-128–Phe-148, Val-154–Leu-174, Val-186–Ile-206, Ile-221–Ile-241, Ser-292–Glu-312, Phe-335–Phe-355, and Pro-362–Phe-382.

It localises to the membrane. This Arabidopsis thaliana (Mouse-ear cress) protein is Putative transmembrane protein At3g54730.